The chain runs to 556 residues: Myb/SANT-like DNA-binding domain-containing protein 2 (556 aa).

Composition is skewed to polar residues over residues 1 to 10 (MAASCGSSQL) and 36 to 45 (GNPSLSDPST). Positions 1–82 (MAASCGSSQL…GGASPSVSFS (82 aa)) are disordered. A compositionally biased stretch (gly residues) spans 56–74 (PAAGGAGLGGGGAAGGRGG). The Myb-like domain occupies 99–169 (SWTPAETNAL…QCRERIKTLR (71 aa)). The segment at 431–458 (PRSPLAEPRGADPSNETPGELEVPSPQA) is disordered.

The chain is Myb/SANT-like DNA-binding domain-containing protein 2 (MSANTD2) from Gallus gallus (Chicken).